Here is a 384-residue protein sequence, read N- to C-terminus: Stress response protein bis1 (384 aa).

Disordered regions lie at residues 1–22 and 344–384; these read MSLA…NKEQ and SPLH…PKRV.

It belongs to the ESS2 family. Heterodimer with ish1.

It is found in the nucleus. It localises to the cytoplasm. The protein localises to the cytoskeleton. Its subcellular location is the spindle. Has a role in maintaining cell viability during stationary phase induced by stress response. May be involved in pre-mRNA splicing. The protein is Stress response protein bis1 (bis1) of Schizosaccharomyces pombe (strain 972 / ATCC 24843) (Fission yeast).